Reading from the N-terminus, the 529-residue chain is Basal body-orientation factor 1 (529 aa).

Positions 1-13 (MPSKGKDKKKGKS) are enriched in basic residues. The tract at residues 1–22 (MPSKGKDKKKGKSKGKDTKKLI) is disordered. 2 coiled-coil regions span residues 85–201 (LKKQ…EAEK) and 271–361 (VKEK…EVER).

Belongs to the BBOF1 family. As to quaternary structure, interacts with MNS1 and ODF2.

Its subcellular location is the cytoplasm. The protein resides in the cytoskeleton. The protein localises to the cilium basal body. It is found in the flagellum axoneme. Functionally, plays an essential role in sperm motility and male fertility by stabilizing the sperm flagellar axonemal structure. May be required for the stability of ODF2 and MANS1 proteins. Dispensable for the assembly and function of motile cilia. In Homo sapiens (Human), this protein is Basal body-orientation factor 1.